The chain runs to 389 residues: Allantoicase (389 aa).

It belongs to the allantoicase family.

It catalyses the reaction allantoate + H2O = (S)-ureidoglycolate + urea. It functions in the pathway nitrogen metabolism; (S)-allantoin degradation; (S)-ureidoglycolate from allantoate (aminidohydrolase route): step 1/1. Utilization of purines as secondary nitrogen sources, when primary sources are limiting. In Xenopus tropicalis (Western clawed frog), this protein is Allantoicase (allc).